Consider the following 349-residue polypeptide: Sphingomyelinase D (349 aa).

A signal peptide spans 1-18; that stretch reads MLLSSLISLALLSSQVVA. His-52 is a catalytic residue. Glu-72, Asp-74, and Asp-123 together coordinate Mg(2+). An SMD-tail motif is present at residues 310–317; the sequence is ATNDNNPW.

It belongs to the sphingomyelinase D/phospholipase D family. It depends on Mg(2+) as a cofactor.

It is found in the secreted. The enzyme catalyses a sphingomyelin + H2O = an N-acylsphing-4-enine 1-phosphate + choline + H(+). Catalyzes the hydrolysis of sphingomyelin. Sphingomyelinases D are produced by some spider in their venoms, but also by arthropods such as ticks, or pathogenic bacteria and fungi. They might play a role in pathogenicity through different mechanisms, such as membrane destabilization and host cell penetration, but also pulmonary inflammation and cutaneous lesions. The protein is Sphingomyelinase D of Uncinocarpus reesii (strain UAMH 1704).